Reading from the N-terminus, the 527-residue chain is Probable protein kinase UbiB (527 aa).

Positions 123–527 (EFNETALASA…AIWLLIYLLS (405 aa)) constitute a Protein kinase domain. ATP contacts are provided by residues 129 to 137 (LASASIAQV) and Lys161. Asp296 functions as the Proton acceptor in the catalytic mechanism. A helical membrane pass occupies residues 506–526 (FTSFILGLCTGLAIWLLIYLL).

This sequence belongs to the ABC1 family. UbiB subfamily.

The protein localises to the cell inner membrane. It participates in cofactor biosynthesis; ubiquinone biosynthesis [regulation]. Is probably a protein kinase regulator of UbiI activity which is involved in aerobic coenzyme Q (ubiquinone) biosynthesis. The protein is Probable protein kinase UbiB of Pasteurella multocida (strain Pm70).